The chain runs to 647 residues: Auxin efflux carrier component 2 (647 aa).

Residues 1 to 7 (MITGKDM) are Extracellular-facing. Residues 8-28 (YDVLAAMVPLYVAMILAYGSV) form a helical membrane-spanning segment. Over 29-38 (RWWGIFTPDQ) the chain is Cytoplasmic. The helical transmembrane segment at 39–59 (CSGINRFVAVFAVPLLSFHFI) threads the bilayer. Val-51 provides a ligand contact to (indol-3-yl)acetate. Residues 60-68 (SSNDPYAMN) lie on the Extracellular side of the membrane. A helical membrane pass occupies residues 69 to 89 (YHFLAADSLQKVVILAALFLW). Over 90–100 (QAFSRRGSLEW) the chain is Cytoplasmic. A helical membrane pass occupies residues 101–121 (MITLFSLSTLPNTLVMGIPLL). The (indol-3-yl)acetate site is built by Asn-112 and Leu-114. At 122 to 131 (RAMYGDFSGN) the chain is on the extracellular side. A helical transmembrane segment spans residues 132–152 (LMVQIVVLQSIIWYTLMLFLF). Tyr-145 serves as a coordination point for (indol-3-yl)acetate. Topologically, residues 153-507 (EFRGAKLLIS…LIRNPNTYSS (355 aa)) are cytoplasmic. Residues Ser-237, Ser-258, and Ser-310 each carry the phosphoserine modification. Positions 339 to 380 (SVPSYPPPNPMFTGSTSGASGVKKKESGGGGSGGGVGVGGQN) are disordered. Position 354 is a phosphothreonine (Thr-354). A compositionally biased stretch (gly residues) spans 366-378 (GGGGSGGGVGVGG). Phosphoserine is present on Ser-393. Disordered regions lie at residues 397 to 420 (EANA…KVSI) and 440 to 481 (PGRK…QQMP). Residues 508 to 528 (LFGLAWSLVSFKWNIKMPTIM) form a helical membrane-spanning segment. The Extracellular portion of the chain corresponds to 529-531 (SGS). The helical transmembrane segment at 532–552 (ISILSDAGLGMAMFSLGLFMA) threads the bilayer. Residues 553–568 (LQPKIIACGKSVAGFA) lie on the Cytoplasmic side of the membrane. Residues 569 to 589 (MAVRFLTGPAVIAATSIAIGI) traverse the membrane as a helical segment. Topologically, residues 590–592 (RGD) are extracellular. Residues 593 to 613 (LLHIAIVQAALPQGIVPFVFA) form a helical membrane-spanning segment. Positions 607 and 608 each coordinate (indol-3-yl)acetate. Over 614 to 626 (KEYNVHPDILSTA) the chain is Cytoplasmic. The chain crosses the membrane as a helical span at residues 627–647 (VIFGMLVALPVTVLYYVLLGL).

This sequence belongs to the auxin efflux carrier (TC 2.A.69.1) family. Homodimer. Interacts with FYPP1 and FYPP3. Component of a complex made of PINs (e.g. PIN1 and PIN2), MAB4/MELs (e.g. NPY1/MAB4 and NPY5/MEL1) and AGC kinases (e.g. D6PK and PID) at the plasma membrane. Binds directly to NPY1/MAB4, NPY5/MEL1 and PID. As to expression, root-specific. Localized to the cortex, epidermis and lateral root cap, predominantly at the upper side of cells.

Its subcellular location is the cell membrane. Functionally, acts as a component of the auxin efflux carrier. Seems to be involved in the root-specific auxin transport, and mediates the root gravitropism. Its particular localization suggests a role in the translocation of auxin towards the elongation zone. Recrutes NPY proteins (e.g. NPY1/MAB4 and NPY5/MEL1) to the plasma membrane in a polar basal localization in root epidermis; this activity is optimized by AGC kinases-mediated (e.g. D6PK and PID) phosphorylation that limits their lateral diffusion-based escape. This Arabidopsis thaliana (Mouse-ear cress) protein is Auxin efflux carrier component 2.